The following is a 596-amino-acid chain: Elongation factor 4 (596 aa).

Positions 2–183 (ENIRNFSIIA…AIIERIPAPS (182 aa)) constitute a tr-type G domain. Residues 14 to 19 (DHGKST) and 130 to 133 (NKID) each bind GTP.

This sequence belongs to the TRAFAC class translation factor GTPase superfamily. Classic translation factor GTPase family. LepA subfamily.

The protein resides in the cell inner membrane. It carries out the reaction GTP + H2O = GDP + phosphate + H(+). Required for accurate and efficient protein synthesis under certain stress conditions. May act as a fidelity factor of the translation reaction, by catalyzing a one-codon backward translocation of tRNAs on improperly translocated ribosomes. Back-translocation proceeds from a post-translocation (POST) complex to a pre-translocation (PRE) complex, thus giving elongation factor G a second chance to translocate the tRNAs correctly. Binds to ribosomes in a GTP-dependent manner. The sequence is that of Elongation factor 4 from Nitratiruptor sp. (strain SB155-2).